Here is a 364-residue protein sequence, read N- to C-terminus: Chaperone protein DnaJ (364 aa).

Residues 5–71 (DYYEILGVAK…QKRQAYDQFG (67 aa)) form the J domain. Residues 127-205 (GSTVKIRIPK…CRGQGLVRKQ (79 aa)) form a CR-type zinc finger. Zn(2+) is bound by residues Cys140, Cys143, Cys157, Cys160, Cys179, Cys182, Cys193, and Cys196. CXXCXGXG motif repeat units lie at residues 140-147 (CDTCSGIG), 157-164 (CSICSGVG), 179-186 (CGTCSGTG), and 193-200 (CGTCRGQG).

This sequence belongs to the DnaJ family. As to quaternary structure, homodimer. The cofactor is Zn(2+).

It is found in the cytoplasm. Participates actively in the response to hyperosmotic and heat shock by preventing the aggregation of stress-denatured proteins and by disaggregating proteins, also in an autonomous, DnaK-independent fashion. Unfolded proteins bind initially to DnaJ; upon interaction with the DnaJ-bound protein, DnaK hydrolyzes its bound ATP, resulting in the formation of a stable complex. GrpE releases ADP from DnaK; ATP binding to DnaK triggers the release of the substrate protein, thus completing the reaction cycle. Several rounds of ATP-dependent interactions between DnaJ, DnaK and GrpE are required for fully efficient folding. Also involved, together with DnaK and GrpE, in the DNA replication of plasmids through activation of initiation proteins. The polypeptide is Chaperone protein DnaJ (Ruthia magnifica subsp. Calyptogena magnifica).